Reading from the N-terminus, the 217-residue chain is MNLVLMGLPGAGKGTQAERIVDDYGIPHISTGDMFRAAMKEETQLGLEAKSFIDKGELVPDEVTIGIVRERLGKNDCEQGFLLDGFPRTVAQAEALEDILKDLGRTIDYVINIKVDKDALMERLTGRRICKNCGATYHLVFNPPAKENVCDKCGGELYQRADDNAETVSTRLEVNLKQTEPLLNFYSEKGYLANIDGAKHINDVYADIKDLLGGLNK.

Residue 10-15 (GAGKGT) participates in ATP binding. The NMP stretch occupies residues 30 to 59 (STGDMFRAAMKEETQLGLEAKSFIDKGELV). AMP contacts are provided by residues Thr31, Arg36, 57-59 (ELV), 85-88 (GFPR), and Gln92. The tract at residues 126–163 (GRRICKNCGATYHLVFNPPAKENVCDKCGGELYQRADD) is LID. Arg127 is a binding site for ATP. Positions 130 and 133 each coordinate Zn(2+). 136–137 (TY) serves as a coordination point for ATP. The Zn(2+) site is built by Cys150 and Cys153. AMP is bound by residues Arg160 and Arg171. Lys199 is an ATP binding site.

The protein belongs to the adenylate kinase family. Monomer.

Its subcellular location is the cytoplasm. It carries out the reaction AMP + ATP = 2 ADP. The protein operates within purine metabolism; AMP biosynthesis via salvage pathway; AMP from ADP: step 1/1. Functionally, catalyzes the reversible transfer of the terminal phosphate group between ATP and AMP. Plays an important role in cellular energy homeostasis and in adenine nucleotide metabolism. This Bacillus pumilus (strain SAFR-032) protein is Adenylate kinase.